A 159-amino-acid chain; its full sequence is Large ribosomal subunit protein uL11 (159 aa).

Belongs to the universal ribosomal protein uL11 family. Part of the ribosomal stalk of the 50S ribosomal subunit. Interacts with L10 and the large rRNA to form the base of the stalk. L10 forms an elongated spine to which L12 dimers bind in a sequential fashion forming a multimeric L10(L12)X complex.

In terms of biological role, forms part of the ribosomal stalk which helps the ribosome interact with GTP-bound translation factors. In Methanococcus maripaludis (strain C6 / ATCC BAA-1332), this protein is Large ribosomal subunit protein uL11.